Reading from the N-terminus, the 436-residue chain is Serine--tRNA ligase (436 aa).

242 to 244 is an L-serine binding site; sequence TAE. 273–275 is a binding site for ATP; the sequence is RSE. Residue glutamate 296 coordinates L-serine. An ATP-binding site is contributed by 360 to 363; the sequence is EISS. Serine 395 is a binding site for L-serine.

This sequence belongs to the class-II aminoacyl-tRNA synthetase family. Type-1 seryl-tRNA synthetase subfamily. As to quaternary structure, homodimer. The tRNA molecule binds across the dimer.

The protein localises to the cytoplasm. The enzyme catalyses tRNA(Ser) + L-serine + ATP = L-seryl-tRNA(Ser) + AMP + diphosphate + H(+). It catalyses the reaction tRNA(Sec) + L-serine + ATP = L-seryl-tRNA(Sec) + AMP + diphosphate + H(+). Its pathway is aminoacyl-tRNA biosynthesis; selenocysteinyl-tRNA(Sec) biosynthesis; L-seryl-tRNA(Sec) from L-serine and tRNA(Sec): step 1/1. In terms of biological role, catalyzes the attachment of serine to tRNA(Ser). Is also able to aminoacylate tRNA(Sec) with serine, to form the misacylated tRNA L-seryl-tRNA(Sec), which will be further converted into selenocysteinyl-tRNA(Sec). The polypeptide is Serine--tRNA ligase (Polynucleobacter asymbioticus (strain DSM 18221 / CIP 109841 / QLW-P1DMWA-1) (Polynucleobacter necessarius subsp. asymbioticus)).